A 35-amino-acid chain; its full sequence is Photosystem II reaction center protein T (35 aa).

A helical membrane pass occupies residues 3–23; the sequence is SVAYILIFTLCIGTIFFAIAF.

This sequence belongs to the PsbT family. In terms of assembly, PSII is composed of 1 copy each of membrane proteins PsbA, PsbB, PsbC, PsbD, PsbE, PsbF, PsbH, PsbI, PsbJ, PsbK, PsbL, PsbM, PsbT, PsbX, PsbY, PsbZ, Psb30/Ycf12, peripheral proteins PsbO, CyanoQ (PsbQ), PsbU, PsbV and a large number of cofactors. It forms dimeric complexes.

It is found in the cellular thylakoid membrane. In terms of biological role, found at the monomer-monomer interface of the photosystem II (PS II) dimer, plays a role in assembly and dimerization of PSII. PSII is a light-driven water plastoquinone oxidoreductase, using light energy to abstract electrons from H(2)O, generating a proton gradient subsequently used for ATP formation. The polypeptide is Photosystem II reaction center protein T (Nostoc punctiforme (strain ATCC 29133 / PCC 73102)).